Here is a 126-residue protein sequence, read N- to C-terminus: Glycine cleavage system H protein (126 aa).

The Lipoyl-binding domain occupies 23 to 105 (AATVGITDHA…YGEGWLLRVR (83 aa)). Position 64 is an N6-lipoyllysine (Lys64).

Belongs to the GcvH family. The glycine cleavage system is composed of four proteins: P, T, L and H. (R)-lipoate is required as a cofactor.

Its function is as follows. The glycine cleavage system catalyzes the degradation of glycine. The H protein shuttles the methylamine group of glycine from the P protein to the T protein. The sequence is that of Glycine cleavage system H protein from Rubrobacter xylanophilus (strain DSM 9941 / JCM 11954 / NBRC 16129 / PRD-1).